The following is a 289-amino-acid chain: Rhodopsin (289 aa).

Topologically, residues 1–7 (YLVSPAG) are extracellular. The helical transmembrane segment at 8-32 (YAALGAYMFLLILVGFPVNFLTLYV) threads the bilayer. Over 33 to 44 (TLEHKKLRTPLN) the chain is Cytoplasmic. Residues 45 to 67 (YILLNLAVADLFMVLGGFTTTMY) traverse the membrane as a helical segment. The Extracellular segment spans residues 68-81 (TSMHGYFVLGRLGC). C81 and C158 are disulfide-bonded. A helical membrane pass occupies residues 82–104 (NLEGFFVTLGGEIALWSLVVLAI). A 'Ionic lock' involved in activated form stabilization motif is present at residues 105–107 (ERW). Over 105-123 (ERWIGVFKSIRNFRFTEDH) the chain is Cytoplasmic. Residues 124-144 (AIMGLGFSWVMAATCAVPPLV) form a helical membrane-spanning segment. The Extracellular segment spans residues 145–173 (GWLRYIPEGMQCSCGVDYYTRAEGFNNES). Residue N171 is glycosylated (N-linked (GlcNAc...) asparagine). A helical membrane pass occupies residues 174-195 (FVIYMFIVHFLIPLIVIFFCYG). Residues 196-223 (RLLCAVKEAAAAQQESETTQRAEKEVSR) lie on the Cytoplasmic side of the membrane. A helical transmembrane segment spans residues 224–245 (MVVIMVIGYLVCWLPYASVAWW). Residues 246–257 (IFCNQGSEFGPI) are Extracellular-facing. Residues 258–279 (FMTLPAFFAKSPAIYNPLIYIC) form a helical membrane-spanning segment. At K267 the chain carries N6-(retinylidene)lysine. Topologically, residues 280 to 289 (MNKQFPHCMI) are cytoplasmic.

Belongs to the G-protein coupled receptor 1 family. Opsin subfamily. Post-translationally, phosphorylated on some or all of the serine and threonine residues present in the C-terminal region. In terms of processing, contains one covalently linked retinal chromophore.

Its subcellular location is the membrane. The protein resides in the cell projection. It localises to the cilium. It is found in the photoreceptor outer segment. Its function is as follows. Photoreceptor required for image-forming vision at low light intensity. While most salt water fish species use retinal as chromophore, most freshwater fish use 3-dehydroretinal, or a mixture of retinal and 3-dehydroretinal. Light-induced isomerization of 11-cis to all-trans retinal triggers a conformational change that activates signaling via G-proteins. Subsequent receptor phosphorylation mediates displacement of the bound G-protein alpha subunit by arrestin and terminates signaling. The sequence is that of Rhodopsin (rho) from Leocottus kesslerii (Kessler's sculpin).